Consider the following 346-residue polypeptide: MQKTIRSQALIYRKFGDPLKVLQLETVEVPAEPGSGECLVEWLASPINPLDINRIQGNYAVRAELPVIGGSEGVGRVVKAGSGSRFKSGDHVTIFSANTPIWTEFGVVDDDELVKLDNRIPLDLAATLMINPPTAWIMLKKYVNLQKGDYIIQNSANSGVGRSVIEMCKALGYKSINIVRNRQNIEALKTDLWRIGADHVFTEEEFKGTSRQFLKSINVRPKLALNGVGGKSALQISSVLERGGTCVTYGGMSKKAHEFTTSALVFNDICVRGVAVGMWARQEEHLDEWNLCVDEVQKLAVAGKITAIPMEKVVLADHKTAIQKSLEGRSIKQLFVINSKASASHI.

The transit peptide at 1–22 directs the protein to the mitochondrion; the sequence is MQKTIRSQALIYRKFGDPLKVL. The active-site Proton donor is Y59. NADP(+)-binding positions include N131, 157–160, 180–182, 249–252, 274–276, and K332; these read NSGV, RNR, YGGM, and VAV.

Belongs to the zinc-containing alcohol dehydrogenase family. Quinone oxidoreductase subfamily. Homodimer.

The protein localises to the mitochondrion. The catalysed reaction is a 2,3-saturated acyl-[ACP] + NADP(+) = a (2E)-enoyl-[ACP] + NADPH + H(+). Catalyzes the NADPH-dependent reduction of trans-2-enoyl thioesters in mitochondrial fatty acid synthesis (fatty acid synthesis type II). Fatty acid chain elongation in mitochondria uses acyl carrier protein (ACP) as an acyl group carrier, but the enzyme accepts both ACP and CoA thioesters as substrates in vitro. May provide the octanoyl chain used for lipoic acid biosynthesis, regulating protein lipoylation and mitochondrial respiratory activity. Involved in iron homeostasis; affecting Fe-S cluster assembly and ceramide metabolism. Required for proper morphology and bioenergetic functions of mitochondria. Required for maintenance of neurons. The chain is Enoyl-[acyl-carrier-protein] reductase, mitochondrial from Caenorhabditis elegans.